Reading from the N-terminus, the 359-residue chain is Guanine nucleotide-binding protein alpha-4 subunit (359 aa).

Gly-2 is lipidated: N-myristoyl glycine. Residue Cys-3 is the site of S-palmitoyl cysteine attachment. Residues 31–359 enclose the G-alpha domain; that stretch reads TEVKLLLLGA…RYNLKDCGLF (329 aa). Residues 34-47 form a G1 motif region; sequence KLLLLGAGESGKST. GTP-binding positions include 39–46, 178–184, 203–207, 272–275, and Ala-331; these read GAGESGKS, LRARVKS, DVGGQ, and NKMD. Ser-46 contacts Mg(2+). The G2 motif stretch occupies residues 176 to 184; sequence DILRARVKS. Positions 199 to 208 are G3 motif; sequence FRMFDVGGQR. The interval 268-275 is G4 motif; it reads ILFLNKMD. The interval 329–334 is G5 motif; that stretch reads TCATDT.

It belongs to the G-alpha family. G(i/o/t/z) subfamily. In terms of assembly, g proteins are composed of 3 units; alpha, beta and gamma. The alpha chain contains the guanine nucleotide binding site.

Its function is as follows. Guanine nucleotide-binding proteins (G proteins) are involved as modulators or transducers in various transmembrane signaling systems. The polypeptide is Guanine nucleotide-binding protein alpha-4 subunit (gpa-4) (Caenorhabditis briggsae).